Consider the following 203-residue polypeptide: Pyridoxine/pyridoxamine 5'-phosphate oxidase (203 aa).

FMN contacts are provided by residues 50–55, 65–66, Lys71, Lys72, and Gln94; these read RMVLLK and YT. Position 55 (Lys55) interacts with substrate. The substrate site is built by Tyr112, Arg116, and Ser120. FMN-binding positions include 129–130 and Trp174; that span reads QS. 180-182 contacts substrate; the sequence is RLH. Arg184 contacts FMN.

Belongs to the pyridoxamine 5'-phosphate oxidase family. Homodimer. FMN serves as cofactor.

The enzyme catalyses pyridoxamine 5'-phosphate + O2 + H2O = pyridoxal 5'-phosphate + H2O2 + NH4(+). It catalyses the reaction pyridoxine 5'-phosphate + O2 = pyridoxal 5'-phosphate + H2O2. The protein operates within cofactor metabolism; pyridoxal 5'-phosphate salvage; pyridoxal 5'-phosphate from pyridoxamine 5'-phosphate: step 1/1. It functions in the pathway cofactor metabolism; pyridoxal 5'-phosphate salvage; pyridoxal 5'-phosphate from pyridoxine 5'-phosphate: step 1/1. In terms of biological role, catalyzes the oxidation of either pyridoxine 5'-phosphate (PNP) or pyridoxamine 5'-phosphate (PMP) into pyridoxal 5'-phosphate (PLP). The polypeptide is Pyridoxine/pyridoxamine 5'-phosphate oxidase (Brucella canis (strain ATCC 23365 / NCTC 10854 / RM-666)).